The chain runs to 518 residues: Membrane-bound lytic murein transglycosylase F (518 aa).

Residues 1–21 (MKKLKINYLFIGILALLLAVA) form the signal peptide. The tract at residues 22–269 (LWPSIPWFGK…RIEEKYLGHG (248 aa)) is non-LT domain. Residues 270–518 (DDFDYVDTRT…SRKGSEEKQN (249 aa)) are LT domain. Glutamate 314 is a catalytic residue.

This sequence in the N-terminal section; belongs to the bacterial solute-binding protein 3 family. It in the C-terminal section; belongs to the transglycosylase Slt family.

It is found in the cell outer membrane. The enzyme catalyses Exolytic cleavage of the (1-&gt;4)-beta-glycosidic linkage between N-acetylmuramic acid (MurNAc) and N-acetylglucosamine (GlcNAc) residues in peptidoglycan, from either the reducing or the non-reducing ends of the peptidoglycan chains, with concomitant formation of a 1,6-anhydrobond in the MurNAc residue.. Its function is as follows. Murein-degrading enzyme that degrades murein glycan strands and insoluble, high-molecular weight murein sacculi, with the concomitant formation of a 1,6-anhydromuramoyl product. Lytic transglycosylases (LTs) play an integral role in the metabolism of the peptidoglycan (PG) sacculus. Their lytic action creates space within the PG sacculus to allow for its expansion as well as for the insertion of various structures such as secretion systems and flagella. The sequence is that of Membrane-bound lytic murein transglycosylase F from Shigella dysenteriae serotype 1 (strain Sd197).